The following is a 252-amino-acid chain: ATP synthase subunit a (252 aa).

The next 6 helical transmembrane spans lie at 29–49 (FTNV…FLFI), 87–107 (FFPL…IGLF), 117–137 (IMIT…YGFY), 146–166 (LFVP…IEVI), 196–216 (FIVS…LPLI), and 219–239 (VAIT…FTVL).

It belongs to the ATPase A chain family. F-type ATPases have 2 components, CF(1) - the catalytic core - and CF(0) - the membrane proton channel. CF(1) has five subunits: alpha(3), beta(3), gamma(1), delta(1), epsilon(1). CF(0) has three main subunits: a(1), b(2) and c(9-12). The alpha and beta chains form an alternating ring which encloses part of the gamma chain. CF(1) is attached to CF(0) by a central stalk formed by the gamma and epsilon chains, while a peripheral stalk is formed by the delta and b chains.

It localises to the cell inner membrane. Key component of the proton channel; it plays a direct role in the translocation of protons across the membrane. This Bartonella henselae (strain ATCC 49882 / DSM 28221 / CCUG 30454 / Houston 1) (Rochalimaea henselae) protein is ATP synthase subunit a.